A 240-amino-acid chain; its full sequence is Aquaporin SIP1-1 (240 aa).

2 helical membrane-spanning segments follow: residues 13 to 33 (LMTFSWVVLSATFGIQTAAII) and 44 to 64 (APLVILTSLIFVYVSIFTVIF). The NPA 1 motif lies at 70–72 (NPT). Helical transmembrane passes span 89 to 109 (SLAIRLPAQAIGAAGGALAIM), 132 to 152 (GAIAETILSFGITFAVLLIIL), and 163 to 183 (FLLALATISFVVAGSKYTGPA). Residues 185–187 (NPA) carry the NPA 2 motif. A helical transmembrane segment spans residues 203-223 (DHIYVYWISSFVGALSAALLF).

The protein belongs to the MIP/aquaporin (TC 1.A.8) family. SIP (TC 1.A.8.10) subfamily. In terms of tissue distribution, expressed in roots and above ground. Expressed in elongating regions of the root tips, trichome cells of the rosette leaves, vascular tissues of the flower petals, stigma, stamens (anthers and filaments), pollen and the top and bottom (receptacle) of siliques.

It localises to the endoplasmic reticulum membrane. In terms of biological role, water channel required to facilitate the transport of water across cell membrane. The protein is Aquaporin SIP1-1 (SIP1-1) of Arabidopsis thaliana (Mouse-ear cress).